We begin with the raw amino-acid sequence, 158 residues long: Small ribosomal subunit protein uS7 (158 aa).

It belongs to the universal ribosomal protein uS7 family. As to quaternary structure, part of the 30S ribosomal subunit. Contacts proteins S9 and S11.

Its function is as follows. One of the primary rRNA binding proteins, it binds directly to 16S rRNA where it nucleates assembly of the head domain of the 30S subunit. Is located at the subunit interface close to the decoding center, probably blocks exit of the E-site tRNA. The polypeptide is Small ribosomal subunit protein uS7 (Leptospira biflexa).